The primary structure comprises 332 residues: Ferredoxin--NADP reductase 1 (332 aa).

FAD-binding residues include D35, K43, F48, V88, F123, D284, and T325.

The protein belongs to the ferredoxin--NADP reductase type 2 family. Homodimer. It depends on FAD as a cofactor.

The catalysed reaction is 2 reduced [2Fe-2S]-[ferredoxin] + NADP(+) + H(+) = 2 oxidized [2Fe-2S]-[ferredoxin] + NADPH. In Listeria monocytogenes serotype 4b (strain F2365), this protein is Ferredoxin--NADP reductase 1.